A 586-amino-acid polypeptide reads, in one-letter code: Solute carrier family 13 member 2 (586 aa).

3 helical membrane passes run 13–33 (SYLI…IVQT), 53–73 (ALPL…MGIM), and 86–106 (TNIL…WNLH). Over residues 165 to 175 (DVEEGNSNPSF) the composition is skewed to polar residues. Residues 165–209 (DVEEGNSNPSFELQEASPQKEETKLDNGQAVSVSSEPRAQKTKEH) form a disordered region. Transmembrane regions (helical) follow at residues 215–235 (GLSL…LTGT), 264–284 (FAFP…QVLF), 319–339 (PMSF…VLWF), 366–386 (GTVA…IPGL), 407–427 (TVND…FALA), 445–465 (PLQH…VAIF), 478–498 (FLPI…YVML), 506–526 (LAFM…FGGL), and 535–555 (GFLL…SWSI).

The protein belongs to the SLC13A/DASS transporter (TC 2.A.47) family. NADC subfamily. In terms of tissue distribution, highly expressed in kidney and small intestine. Not detectable in brain, heart, stomach and skeletal muscle.

The protein localises to the apical cell membrane. It catalyses the reaction succinate(out) + 3 Na(+)(out) = succinate(in) + 3 Na(+)(in). The enzyme catalyses fumarate(out) + 3 Na(+)(out) = fumarate(in) + 3 Na(+)(in). It carries out the reaction 2-oxoglutarate(out) + 3 Na(+)(out) = 2-oxoglutarate(in) + 3 Na(+)(in). Li(+) decreases succinate transport in the presence of Na(+), by competing at one of the three cation binding sites. Low-affinity sodium-dicarboxylate cotransporter, that mediates the entry of citric acid cycle intermediates, such as succinate, citrate, fumarate and alpha-ketoglutarate (2-oxoglutarate) into the small intestine and renal proximal tubule. Can transport citrate in a Na(+)-dependent manner, recognizing the divalent form of citrate rather than the trivalent form which is normally found in blood. Transports the dicarboxylate into the cell with a probable stoichiometry of 3 Na(+) for 1 divalent dicarboxylate, rendering the process electrogenic. Has a critical role in renal dicarboxylate transport. The polypeptide is Solute carrier family 13 member 2 (Slc13a2) (Mus musculus (Mouse)).